The primary structure comprises 362 residues: Homeobox protein extradenticle (362 aa).

The 192-residue stretch at 34–225 folds into the PBC domain; that stretch reads PRKQDIGEIL…VMILRSRFLD (192 aa). The interval 41-120 is PBC-A; that stretch reads EILQQIMNIT…EGVAGPEKGG (80 aa). Residues 123 to 225 are PBC-B; sequence DFLSQSDLTG…VMILRSRFLD (103 aa). Positions 226–288 form a DNA-binding region, homeobox; TALE-type; that stretch reads ARRKRRNFSK…NKRIRYKKNI (63 aa). Positions 305 to 362 are disordered; the sequence is GASPYSMGGPPSGAATPMMSPAPAQDSMGYSLGSGGYDQQQPYDGSMGYDQLHQDLSP.

Belongs to the TALE/PBX homeobox family.

The protein resides in the nucleus. Its function is as follows. Transcription factor which acts with the selector homeodomain proteins altering the regulation of downstream target genes such as wingless (wg), teashirt (tsh) and decapentaplegic (dpp), thus affecting segmental identity. The chain is Homeobox protein extradenticle from Anopheles gambiae (African malaria mosquito).